Reading from the N-terminus, the 49-residue chain is Small, acid-soluble spore protein O (49 aa).

Residues 1–49 are disordered; that stretch reads MGKRKANHIVPGMNAASAQGQGTGYNEEFANEPLTAAQRQNNKKRKKNQ.

Belongs to the SspO family.

It localises to the spore core. The chain is Small, acid-soluble spore protein O from Bacillus cytotoxicus (strain DSM 22905 / CIP 110041 / 391-98 / NVH 391-98).